We begin with the raw amino-acid sequence, 554 residues long: Phosphomethylpyrimidine synthase (554 aa).

Substrate contacts are provided by residues Asn188, Met217, Tyr246, His282, 302–304 (SRG), 343–346 (DGLR), and Glu382. Zn(2+) is bound at residue His386. Position 409 (Tyr409) interacts with substrate. Position 450 (His450) interacts with Zn(2+). Residues Cys530, Cys533, and Cys538 each contribute to the [4Fe-4S] cluster site.

Belongs to the ThiC family. Homodimer. [4Fe-4S] cluster is required as a cofactor.

It catalyses the reaction 5-amino-1-(5-phospho-beta-D-ribosyl)imidazole + S-adenosyl-L-methionine = 4-amino-2-methyl-5-(phosphooxymethyl)pyrimidine + CO + 5'-deoxyadenosine + formate + L-methionine + 3 H(+). Its pathway is cofactor biosynthesis; thiamine diphosphate biosynthesis. Functionally, catalyzes the synthesis of the hydroxymethylpyrimidine phosphate (HMP-P) moiety of thiamine from aminoimidazole ribotide (AIR) in a radical S-adenosyl-L-methionine (SAM)-dependent reaction. The chain is Phosphomethylpyrimidine synthase from Coxiella burnetii (strain Dugway 5J108-111).